Reading from the N-terminus, the 41-residue chain is Hemoglobin subunit beta (41 aa).

Positions 1–41 constitute a Globin domain; sequence LGNVLVCVLAHHFGKEFTPQVQAAYQKVVAGVANALAHKYH. K39 is modified (N6-acetyllysine).

It belongs to the globin family. As to quaternary structure, heterotetramer of two alpha chains and two beta chains. In terms of tissue distribution, red blood cells.

Involved in oxygen transport from the lung to the various peripheral tissues. The polypeptide is Hemoglobin subunit beta (HBB) (Colobus guereza (Mantled guereza)).